The following is an 89-amino-acid chain: MKAIITVIGKDKVGIIAGVSSILAEMKINILDISQTIMQEYFTMIMLTDLSCSVVSFDKVKTELDEKGKKLGVSIKIQDEGIFNSMNRV.

Positions 4-78 (IITVIGKDKV…KKLGVSIKIQ (75 aa)) constitute an ACT domain.

Belongs to the UPF0237 family.

The sequence is that of UPF0237 protein CA_C0478 from Clostridium acetobutylicum (strain ATCC 824 / DSM 792 / JCM 1419 / IAM 19013 / LMG 5710 / NBRC 13948 / NRRL B-527 / VKM B-1787 / 2291 / W).